The sequence spans 81 residues: Protein translocase subunit SecE (81 aa).

A helical membrane pass occupies residues valine 50 to phenylalanine 70.

It belongs to the SecE/SEC61-gamma family. As to quaternary structure, component of the Sec protein translocase complex. Heterotrimer consisting of SecY, SecE and SecG subunits. The heterotrimers can form oligomers, although 1 heterotrimer is thought to be able to translocate proteins. Interacts with the ribosome. Interacts with SecDF, and other proteins may be involved. Interacts with SecA.

It is found in the cell inner membrane. Its subcellular location is the cellular thylakoid membrane. In terms of biological role, essential subunit of the Sec protein translocation channel SecYEG. Clamps together the 2 halves of SecY. May contact the channel plug during translocation. The polypeptide is Protein translocase subunit SecE (Synechocystis sp. (strain ATCC 27184 / PCC 6803 / Kazusa)).